The sequence spans 264 residues: Thymidylate synthase (264 aa).

Arginine 21 provides a ligand contact to dUMP. Residue histidine 51 participates in (6R)-5,10-methylene-5,6,7,8-tetrahydrofolate binding. 126–127 (RR) provides a ligand contact to dUMP. Cysteine 146 serves as the catalytic Nucleophile. Residues 166 to 169 (RSCD), asparagine 177, and 207 to 209 (HLY) each bind dUMP. (6R)-5,10-methylene-5,6,7,8-tetrahydrofolate is bound at residue aspartate 169. Alanine 263 serves as a coordination point for (6R)-5,10-methylene-5,6,7,8-tetrahydrofolate.

It belongs to the thymidylate synthase family. Bacterial-type ThyA subfamily. In terms of assembly, homodimer.

It localises to the cytoplasm. It catalyses the reaction dUMP + (6R)-5,10-methylene-5,6,7,8-tetrahydrofolate = 7,8-dihydrofolate + dTMP. Its pathway is pyrimidine metabolism; dTTP biosynthesis. Functionally, catalyzes the reductive methylation of 2'-deoxyuridine-5'-monophosphate (dUMP) to 2'-deoxythymidine-5'-monophosphate (dTMP) while utilizing 5,10-methylenetetrahydrofolate (mTHF) as the methyl donor and reductant in the reaction, yielding dihydrofolate (DHF) as a by-product. This enzymatic reaction provides an intracellular de novo source of dTMP, an essential precursor for DNA biosynthesis. The sequence is that of Thymidylate synthase from Pectobacterium carotovorum subsp. carotovorum (strain PC1).